Here is a 728-residue protein sequence, read N- to C-terminus: Phosphoribosylformylglycinamidine synthase subunit PurL (728 aa).

The active site involves H40. Y43 and K82 together coordinate ATP. E84 serves as a coordination point for Mg(2+). Residues 85–88 (SHNH) and R107 each bind substrate. Residue H86 is the Proton acceptor of the active site. D108 provides a ligand contact to Mg(2+). Q231 provides a ligand contact to substrate. D259 contacts Mg(2+). 303–305 (ESQ) lines the substrate pocket. Positions 483 and 520 each coordinate ATP. N521 is a Mg(2+) binding site. S523 serves as a coordination point for substrate.

The protein belongs to the FGAMS family. As to quaternary structure, monomer. Part of the FGAM synthase complex composed of 1 PurL, 1 PurQ and 2 PurS subunits.

It localises to the cytoplasm. It carries out the reaction N(2)-formyl-N(1)-(5-phospho-beta-D-ribosyl)glycinamide + L-glutamine + ATP + H2O = 2-formamido-N(1)-(5-O-phospho-beta-D-ribosyl)acetamidine + L-glutamate + ADP + phosphate + H(+). Its pathway is purine metabolism; IMP biosynthesis via de novo pathway; 5-amino-1-(5-phospho-D-ribosyl)imidazole from N(2)-formyl-N(1)-(5-phospho-D-ribosyl)glycinamide: step 1/2. In terms of biological role, part of the phosphoribosylformylglycinamidine synthase complex involved in the purines biosynthetic pathway. Catalyzes the ATP-dependent conversion of formylglycinamide ribonucleotide (FGAR) and glutamine to yield formylglycinamidine ribonucleotide (FGAM) and glutamate. The FGAM synthase complex is composed of three subunits. PurQ produces an ammonia molecule by converting glutamine to glutamate. PurL transfers the ammonia molecule to FGAR to form FGAM in an ATP-dependent manner. PurS interacts with PurQ and PurL and is thought to assist in the transfer of the ammonia molecule from PurQ to PurL. In Carboxydothermus hydrogenoformans (strain ATCC BAA-161 / DSM 6008 / Z-2901), this protein is Phosphoribosylformylglycinamidine synthase subunit PurL.